The chain runs to 207 residues: Thiamine-phosphate synthase (207 aa).

4-amino-2-methyl-5-(diphosphooxymethyl)pyrimidine is bound by residues 38 to 42 (QYRAK) and N70. Mg(2+) contacts are provided by D71 and D90. Residue T109 coordinates 4-amino-2-methyl-5-(diphosphooxymethyl)pyrimidine. 135–137 (TNS) is a 2-[(2R,5Z)-2-carboxy-4-methylthiazol-5(2H)-ylidene]ethyl phosphate binding site. K138 lines the 4-amino-2-methyl-5-(diphosphooxymethyl)pyrimidine pocket. Residues G165 and 185 to 186 (IS) contribute to the 2-[(2R,5Z)-2-carboxy-4-methylthiazol-5(2H)-ylidene]ethyl phosphate site.

Belongs to the thiamine-phosphate synthase family. Mg(2+) serves as cofactor.

The enzyme catalyses 2-[(2R,5Z)-2-carboxy-4-methylthiazol-5(2H)-ylidene]ethyl phosphate + 4-amino-2-methyl-5-(diphosphooxymethyl)pyrimidine + 2 H(+) = thiamine phosphate + CO2 + diphosphate. The catalysed reaction is 2-(2-carboxy-4-methylthiazol-5-yl)ethyl phosphate + 4-amino-2-methyl-5-(diphosphooxymethyl)pyrimidine + 2 H(+) = thiamine phosphate + CO2 + diphosphate. It carries out the reaction 4-methyl-5-(2-phosphooxyethyl)-thiazole + 4-amino-2-methyl-5-(diphosphooxymethyl)pyrimidine + H(+) = thiamine phosphate + diphosphate. It functions in the pathway cofactor biosynthesis; thiamine diphosphate biosynthesis; thiamine phosphate from 4-amino-2-methyl-5-diphosphomethylpyrimidine and 4-methyl-5-(2-phosphoethyl)-thiazole: step 1/1. In terms of biological role, condenses 4-methyl-5-(beta-hydroxyethyl)thiazole monophosphate (THZ-P) and 2-methyl-4-amino-5-hydroxymethyl pyrimidine pyrophosphate (HMP-PP) to form thiamine monophosphate (TMP). The protein is Thiamine-phosphate synthase of Clostridium perfringens (strain 13 / Type A).